The chain runs to 173 residues: Dual-action ribosomal maturation protein DarP (173 aa).

Belongs to the DarP family.

The protein localises to the cytoplasm. Functionally, member of a network of 50S ribosomal subunit biogenesis factors which assembles along the 30S-50S interface, preventing incorrect 23S rRNA structures from forming. Promotes peptidyl transferase center (PTC) maturation. The protein is Dual-action ribosomal maturation protein DarP of Pseudomonas syringae pv. tomato (strain ATCC BAA-871 / DC3000).